The following is a 153-amino-acid chain: Phosphopantetheine adenylyltransferase (153 aa).

Ser-11 contacts substrate. ATP contacts are provided by residues 11 to 12 and His-19; that span reads SF. Substrate contacts are provided by Lys-43, Thr-75, and Arg-89. ATP is bound by residues 90 to 92, Glu-100, and 124 to 130; these read GIR and LSFISSS.

Belongs to the bacterial CoaD family. Homohexamer. It depends on Mg(2+) as a cofactor.

It is found in the cytoplasm. The catalysed reaction is (R)-4'-phosphopantetheine + ATP + H(+) = 3'-dephospho-CoA + diphosphate. It participates in cofactor biosynthesis; coenzyme A biosynthesis; CoA from (R)-pantothenate: step 4/5. Functionally, reversibly transfers an adenylyl group from ATP to 4'-phosphopantetheine, yielding dephospho-CoA (dPCoA) and pyrophosphate. This chain is Phosphopantetheine adenylyltransferase, found in Porphyromonas gingivalis (strain ATCC 33277 / DSM 20709 / CIP 103683 / JCM 12257 / NCTC 11834 / 2561).